A 295-amino-acid chain; its full sequence is 4-diphosphocytidyl-2-C-methyl-D-erythritol kinase (295 aa).

K22 is an active-site residue. 106–116 (PAGGGFGGGSS) lines the ATP pocket. D148 is a catalytic residue.

Belongs to the GHMP kinase family. IspE subfamily.

It carries out the reaction 4-CDP-2-C-methyl-D-erythritol + ATP = 4-CDP-2-C-methyl-D-erythritol 2-phosphate + ADP + H(+). It participates in isoprenoid biosynthesis; isopentenyl diphosphate biosynthesis via DXP pathway; isopentenyl diphosphate from 1-deoxy-D-xylulose 5-phosphate: step 3/6. In terms of biological role, catalyzes the phosphorylation of the position 2 hydroxy group of 4-diphosphocytidyl-2C-methyl-D-erythritol. The protein is 4-diphosphocytidyl-2-C-methyl-D-erythritol kinase of Xanthomonas oryzae pv. oryzae (strain MAFF 311018).